The sequence spans 348 residues: Sec-independent protein translocase protein TatC (348 aa).

A run of 6 helical transmembrane segments spans residues 7–27, 162–182, 192–212, 244–264, 278–298, and 299–319; these read LCLT…MDIL, VVIS…PGLL, CMAV…FIVL, MILM…FVKL, YAIV…DVAT, and MMLM…LAWM.

Belongs to the TatC family. As to quaternary structure, forms a complex with TatA.

The protein localises to the cell membrane. Functionally, part of the twin-arginine translocation (Tat) system that transports large folded proteins containing a characteristic twin-arginine motif in their signal peptide across membranes. The protein is Sec-independent protein translocase protein TatC of Akkermansia muciniphila (strain ATCC BAA-835 / DSM 22959 / JCM 33894 / BCRC 81048 / CCUG 64013 / CIP 107961 / Muc).